Reading from the N-terminus, the 496-residue chain is Chromosomal replication initiator protein DnaA (496 aa).

The segment at 1–76 is domain I, interacts with DnaA modulators; it reads MKMDSAVSEE…TELWQEENPQ (76 aa). A domain II region spans residues 76 to 150; the sequence is QILKVEVVVR…AAATGAVLGS (75 aa). The segment at 151–373 is domain III, AAA+ region; the sequence is PLDPRYTFDT…GAFNQLLFRQ (223 aa). Residues G197, G199, K200, and T201 each contribute to the ATP site. The tract at residues 374–496 is domain IV, binds dsDNA; the sequence is SFEPNISIDR…LKRLINDQAA (123 aa).

The protein belongs to the DnaA family. As to quaternary structure, oligomerizes as a right-handed, spiral filament on DNA at oriC.

It localises to the cytoplasm. Functionally, plays an essential role in the initiation and regulation of chromosomal replication. ATP-DnaA binds to the origin of replication (oriC) to initiate formation of the DNA replication initiation complex once per cell cycle. Binds the DnaA box (a 9 base pair repeat at the origin) and separates the double-stranded (ds)DNA. Forms a right-handed helical filament on oriC DNA; dsDNA binds to the exterior of the filament while single-stranded (ss)DNA is stabiized in the filament's interior. The ATP-DnaA-oriC complex binds and stabilizes one strand of the AT-rich DNA unwinding element (DUE), permitting loading of DNA polymerase. After initiation quickly degrades to an ADP-DnaA complex that is not apt for DNA replication. Binds acidic phospholipids. The polypeptide is Chromosomal replication initiator protein DnaA (Brucella abortus biovar 1 (strain 9-941)).